The sequence spans 109 residues: Cell division suppressor protein YneA (109 aa).

Residues 39–90 (SEVNVSEGDSLWALADQYAGKSDMAKADFVSWVEKENNLADGHVEAGESVVI) form the LysM domain.

This sequence belongs to the YneA family.

It localises to the cytoplasm. In terms of biological role, inhibits cell division during the SOS response. Affects a later stage of the cell division protein assembly, after the assembly of the Z ring, by probably suppressing recruitment of FtsL and/or DivIC to the division machinery. This chain is Cell division suppressor protein YneA, found in Listeria monocytogenes serotype 4b (strain F2365).